The following is a 276-amino-acid chain: NADPH-dependent 7-cyano-7-deazaguanine reductase (276 aa).

83–85 (IES) is a substrate binding site. NADPH is bound at residue 85 to 86 (SK). The Thioimide intermediate role is filled by cysteine 184. Aspartate 191 acts as the Proton donor in catalysis. 223-224 (HE) contacts substrate. 252–253 (RG) contributes to the NADPH binding site.

It belongs to the GTP cyclohydrolase I family. QueF type 2 subfamily. Homodimer.

It localises to the cytoplasm. It carries out the reaction 7-aminomethyl-7-carbaguanine + 2 NADP(+) = 7-cyano-7-deazaguanine + 2 NADPH + 3 H(+). Its pathway is tRNA modification; tRNA-queuosine biosynthesis. Catalyzes the NADPH-dependent reduction of 7-cyano-7-deazaguanine (preQ0) to 7-aminomethyl-7-deazaguanine (preQ1). The polypeptide is NADPH-dependent 7-cyano-7-deazaguanine reductase (Pseudomonas paraeruginosa (strain DSM 24068 / PA7) (Pseudomonas aeruginosa (strain PA7))).